Here is an 84-residue protein sequence, read N- to C-terminus: Small ribosomal subunit protein bS20 (84 aa).

The protein belongs to the bacterial ribosomal protein bS20 family.

Binds directly to 16S ribosomal RNA. In Lactiplantibacillus plantarum (strain ATCC BAA-793 / NCIMB 8826 / WCFS1) (Lactobacillus plantarum), this protein is Small ribosomal subunit protein bS20.